A 208-amino-acid polypeptide reads, in one-letter code: Harpin secretion protein HrpW (208 aa).

4 helical membrane passes run L2 to F22, A46 to I66, I149 to L169, and V176 to W196.

The protein belongs to the FliP/MopC/SpaP family.

The protein resides in the cell membrane. Its function is as follows. Required for the secretion of harpin. The chain is Harpin secretion protein HrpW (hrpW) from Pseudomonas syringae pv. syringae.